The following is an 89-amino-acid chain: Small ribosomal subunit protein bS20 (89 aa).

This sequence belongs to the bacterial ribosomal protein bS20 family.

Functionally, binds directly to 16S ribosomal RNA. The sequence is that of Small ribosomal subunit protein bS20 from Wolbachia pipientis wMel.